Here is a 187-residue protein sequence, read N- to C-terminus: uncharacterized protein (187 aa).

The signal sequence occupies residues 1-25; the sequence is MSKFVKTAIAAAMVMGAFTSTATIA.

This sequence belongs to the fimbrial protein family.

Functionally, part of the yfcOPQRSUV fimbrial operon. Could contribute to adhesion to various surfaces in specific environmental niches. Increases adhesion to eukaryotic T24 bladder epithelial cells in the absence of fim genes. This is an uncharacterized protein from Escherichia coli (strain K12).